The chain runs to 302 residues: Oxygen-dependent coproporphyrinogen-III oxidase (302 aa).

Substrate is bound at residue Ser-94. A divalent metal cation-binding residues include His-98 and His-108. His-108 serves as the catalytic Proton donor. 110–112 contributes to the substrate binding site; that stretch reads NVR. A divalent metal cation is bound by residues His-147 and His-177. Positions 242-277 are important for dimerization; the sequence is YVEFNLVYDRGTLFGLQTGGRTESILMSMPPLVRWQ. A substrate-binding site is contributed by 260–262; that stretch reads GGR.

The protein belongs to the aerobic coproporphyrinogen-III oxidase family. Homodimer. A divalent metal cation serves as cofactor.

The protein localises to the cytoplasm. It carries out the reaction coproporphyrinogen III + O2 + 2 H(+) = protoporphyrinogen IX + 2 CO2 + 2 H2O. Its pathway is porphyrin-containing compound metabolism; protoporphyrin-IX biosynthesis; protoporphyrinogen-IX from coproporphyrinogen-III (O2 route): step 1/1. Functionally, involved in the heme biosynthesis. Catalyzes the aerobic oxidative decarboxylation of propionate groups of rings A and B of coproporphyrinogen-III to yield the vinyl groups in protoporphyrinogen-IX. The protein is Oxygen-dependent coproporphyrinogen-III oxidase of Shewanella baltica (strain OS155 / ATCC BAA-1091).